The chain runs to 251 residues: 3-deoxy-manno-octulosonate cytidylyltransferase (251 aa).

This sequence belongs to the KdsB family.

It localises to the cytoplasm. The catalysed reaction is 3-deoxy-alpha-D-manno-oct-2-ulosonate + CTP = CMP-3-deoxy-beta-D-manno-octulosonate + diphosphate. Its pathway is nucleotide-sugar biosynthesis; CMP-3-deoxy-D-manno-octulosonate biosynthesis; CMP-3-deoxy-D-manno-octulosonate from 3-deoxy-D-manno-octulosonate and CTP: step 1/1. It functions in the pathway bacterial outer membrane biogenesis; lipopolysaccharide biosynthesis. Its function is as follows. Activates KDO (a required 8-carbon sugar) for incorporation into bacterial lipopolysaccharide in Gram-negative bacteria. In Vibrio vulnificus (strain CMCP6), this protein is 3-deoxy-manno-octulosonate cytidylyltransferase.